Consider the following 692-residue polypeptide: Ribosome-releasing factor 2, mitochondrial (692 aa).

Residues 1–29 (MLKYAWQSGPKQRNRWLWHLSNQIWKRSY) constitute a mitochondrion transit peptide. Positions 31–310 (SKIRNIGILA…AVNAYLPAPE (280 aa)) constitute a tr-type G domain. Residues 40–47 (AHIDAGKT), 104–108 (DTPGH), and 158–161 (NKMD) each bind GTP.

This sequence belongs to the TRAFAC class translation factor GTPase superfamily. Classic translation factor GTPase family. EF-G/EF-2 subfamily.

Its subcellular location is the mitochondrion. Mitochondrial GTPase that mediates the disassembly of ribosomes from messenger RNA at the termination of mitochondrial protein biosynthesis. Not involved in the GTP-dependent ribosomal translocation step during translation elongation. This chain is Ribosome-releasing factor 2, mitochondrial, found in Drosophila sechellia (Fruit fly).